Consider the following 277-residue polypeptide: uncharacterized protein (277 aa).

The next 4 helical transmembrane spans lie at 37-59 (YLRY…LYIW), 63-82 (LIFG…PKVI), 214-236 (MLCG…KTYI), and 246-268 (WITS…TYLF).

The protein localises to the cell membrane. This is an uncharacterized protein from Bacillus anthracis.